A 345-amino-acid polypeptide reads, in one-letter code: Neuropeptide receptor 15 (345 aa).

Residues 1 to 11 (MSVAVGIPYVC) lie on the Extracellular side of the membrane. Residues 12–32 (FFIILSVVGIIGNVIVIYAIA) form a helical membrane-spanning segment. The Cytoplasmic portion of the chain corresponds to 33-40 (GDRNMRKS). Residues 41–61 (VMNILLLNLAVADLANLIFTI) traverse the membrane as a helical segment. Residues 62 to 90 (PEWIPPVFFGSTDWLFPSFLCPVCRYLEC) are Extracellular-facing. The cysteines at positions 82 and 171 are disulfide-linked. A helical membrane pass occupies residues 91 to 111 (VFLFASISTQMIVCIERYIAI). At 112-125 (VLPMQARQLCSRRN) the chain is on the cytoplasmic side. The helical transmembrane segment at 126–146 (VLITVLVDWIFVACFASPYAV) threads the bilayer. Topologically, residues 147-187 (WHSVKTKDRNTNSLRFKLFQLSATCSNTVGKSTWWQGYKLT) are extracellular. The chain crosses the membrane as a helical span at residues 188-208 (EFLAFYFVPCFIITVVYTKVA). Residues 209–246 (KCLWCKDPTLQCETRSCLDNKSSSRSSDALRTRRNVVK) lie on the Cytoplasmic side of the membrane. A helical transmembrane segment spans residues 247–267 (MLIACVAVYFVCYSPIQVIFL). Residues 268–281 (SKAVLNVTIHPPYD) are Extracellular-facing. The chain crosses the membrane as a helical span at residues 282–304 (FILLMNALAMTCSASNPLLYTLF). Topologically, residues 305–345 (SQKFRRRLRDVLYCPSDVENETKTYYSINNTSIVGPRASFN) are cytoplasmic.

The protein belongs to the G-protein coupled receptor 1 family. Expressed in pharyngeal muscle and AWC, ASG, ASE, ASI, and ASJ sensory neurons. Expressed in ASI neuron. Expressed in AFD neurons and in AVK interneuron.

The protein localises to the cell membrane. Probable receptor for neuropeptide ligand nlp-8 that plays a role in octopamine signaling and specifically, the octopamine inhibition of aversion responses in olfactory sensory neurons. Plays a crucial role in daf-7 expression. Acts in concert with gpa-4 to activate TGF-beta-like daf-7 secretion in the ASI neuron, thereby promoting larval development and inhibition of dauer diapause. Suppresses immune response against pathogenic infection by inhibiting transcription regulators elt-2 and hlh-30 in ASJ neuron. Promotes pathogen avoidance behavior via intestinal gon-2, independent of aerotaxis. The protein is Neuropeptide receptor 15 (npr-15) of Caenorhabditis elegans.